The primary structure comprises 91 residues: Defensin-like protein 82 (91 aa).

A signal peptide spans 1–27 (MAIKKFSSLLLPLLMVLALVVLPIISG). 4 disulfides stabilise this stretch: cysteine 34–cysteine 72, cysteine 41–cysteine 62, cysteine 47–cysteine 70, and cysteine 51–cysteine 71.

Belongs to the DEFL family.

The protein localises to the secreted. The protein is Defensin-like protein 82 of Arabidopsis thaliana (Mouse-ear cress).